The primary structure comprises 351 residues: DNA polymerase IV (351 aa).

Positions 4–185 (IIHVDMDCFF…LPLAKIPGVG (182 aa)) constitute a UmuC domain. Residues aspartate 8 and aspartate 103 each contribute to the Mg(2+) site. The active site involves glutamate 104.

Belongs to the DNA polymerase type-Y family. In terms of assembly, monomer. Mg(2+) serves as cofactor.

It is found in the cytoplasm. It catalyses the reaction DNA(n) + a 2'-deoxyribonucleoside 5'-triphosphate = DNA(n+1) + diphosphate. In terms of biological role, poorly processive, error-prone DNA polymerase involved in untargeted mutagenesis. Copies undamaged DNA at stalled replication forks, which arise in vivo from mismatched or misaligned primer ends. These misaligned primers can be extended by PolIV. Exhibits no 3'-5' exonuclease (proofreading) activity. May be involved in translesional synthesis, in conjunction with the beta clamp from PolIII. The sequence is that of DNA polymerase IV from Salmonella choleraesuis (strain SC-B67).